Reading from the N-terminus, the 126-residue chain is Large ribosomal subunit protein bL12 (126 aa).

Belongs to the bacterial ribosomal protein bL12 family. As to quaternary structure, homodimer. Part of the ribosomal stalk of the 50S ribosomal subunit. Forms a multimeric L10(L12)X complex, where L10 forms an elongated spine to which 2 to 4 L12 dimers bind in a sequential fashion. Binds GTP-bound translation factors.

Its function is as follows. Forms part of the ribosomal stalk which helps the ribosome interact with GTP-bound translation factors. Is thus essential for accurate translation. The polypeptide is Large ribosomal subunit protein bL12 (Moorella thermoacetica (strain ATCC 39073 / JCM 9320)).